The chain runs to 526 residues: Outer capsid protein VP5 (526 aa).

Positions 1–42 (MGKVIRSLSRFGKKVGNALTSNTAKKIYSTIGKAAERFAESE) are involved in membrane permeabilization.

Belongs to the orbivirus VP5 family.

It localises to the virion. VP5 protein is one of the two proteins (with VP2) which constitute the virus particle outer capsid. Acts as a membrane permeabilization protein that mediates release of viral particles from endosomal compartments into the cytoplasm. Permeabilization activity is probably negatively regulated by VP2 and is triggered by endosomal degradation of VP2 and exposure to low pH. The protein is Outer capsid protein VP5 (Segment-6) of Bluetongue virus 1 (isolate Australia) (BTV 1).